The chain runs to 74 residues: Sec-independent protein translocase protein TatA (74 aa).

The chain crosses the membrane as a helical span at residues 1 to 21; it reads MGGISIWQLLIIVAIVVLLFG. The interval 45-74 is disordered; that stretch reads EEPKDAEFKSLDKAENTAQTKKEEKEKEQA.

It belongs to the TatA/E family. In terms of assembly, the Tat system comprises two distinct complexes: a TatABC complex, containing multiple copies of TatA, TatB and TatC subunits, and a separate TatA complex, containing only TatA subunits. Substrates initially bind to the TatABC complex, which probably triggers association of the separate TatA complex to form the active translocon.

It localises to the cell inner membrane. Part of the twin-arginine translocation (Tat) system that transports large folded proteins containing a characteristic twin-arginine motif in their signal peptide across membranes. TatA could form the protein-conducting channel of the Tat system. The protein is Sec-independent protein translocase protein TatA of Actinobacillus succinogenes (strain ATCC 55618 / DSM 22257 / CCUG 43843 / 130Z).